We begin with the raw amino-acid sequence, 879 residues long: Alanine--tRNA ligase (879 aa).

Residues H567, H571, C669, and H673 each contribute to the Zn(2+) site.

The protein belongs to the class-II aminoacyl-tRNA synthetase family. The cofactor is Zn(2+).

It is found in the cytoplasm. The catalysed reaction is tRNA(Ala) + L-alanine + ATP = L-alanyl-tRNA(Ala) + AMP + diphosphate. Catalyzes the attachment of alanine to tRNA(Ala) in a two-step reaction: alanine is first activated by ATP to form Ala-AMP and then transferred to the acceptor end of tRNA(Ala). Also edits incorrectly charged Ser-tRNA(Ala) and Gly-tRNA(Ala) via its editing domain. This chain is Alanine--tRNA ligase, found in Lactobacillus helveticus (strain DPC 4571).